The primary structure comprises 156 residues: Small ribosomal subunit protein uS7 (156 aa).

The protein belongs to the universal ribosomal protein uS7 family. Part of the 30S ribosomal subunit. Contacts proteins S9 and S11.

One of the primary rRNA binding proteins, it binds directly to 16S rRNA where it nucleates assembly of the head domain of the 30S subunit. Is located at the subunit interface close to the decoding center, probably blocks exit of the E-site tRNA. In Paracoccus denitrificans (strain Pd 1222), this protein is Small ribosomal subunit protein uS7.